The chain runs to 437 residues: Elongation factor 1-gamma-B (437 aa).

Residues 2–87 enclose the GST N-terminal domain; it reads AGGTLYTYPD…YVANDELRGS (86 aa). Positions 89–222 constitute a GST C-terminal domain; sequence NRLHQAQVIQ…KMAQFDAKKF (134 aa). A compositionally biased stretch (basic and acidic residues) spans 225-240; it reads VQPKKETPKKEKPAKE. The segment at 225–279 is disordered; the sequence is VQPKKETPKKEKPAKEPKKKKKKKKKATPAPAPAPEDDLDESEKALAAEPKSKDP. A compositionally biased stretch (basic residues) spans 241 to 251; it reads PKKKKKKKKKA. The segment covering 266 to 279 has biased composition (basic and acidic residues); that stretch reads SEKALAAEPKSKDP. An EF-1-gamma C-terminal domain is found at 276-437; that stretch reads SKDPYAHLPK…KAFNQGKIFK (162 aa).

In terms of assembly, EF-1 is composed of four subunits: alpha, beta, delta, and gamma.

In terms of biological role, probably plays a role in anchoring the complex to other cellular components. The chain is Elongation factor 1-gamma-B (eef1g-b) from Xenopus laevis (African clawed frog).